Reading from the N-terminus, the 163-residue chain is IQSTSMDQGILTEDSMNSFIRTLIQAGIWKNKVPKQTARTKDGTQTTVKKSEAEADATASQDTRLGFQPVVSVDAELLRQQRRFSSPRVLLSENTPLEPPPLYLTEEPVVLNRTSRRKREGKSHRGEYSVCDSESRWVTDKSSAVDIRGHQVTVLGEIRMGPS.

An N-terminal signal peptide occupies residues 1-3 (IQS). The propeptide occupies 4-119 (TSMDQGILTE…VLNRTSRRKR (116 aa)). The disordered stretch occupies residues 35 to 61 (KQTARTKDGTQTTVKKSEAEADATASQ). Asn112 carries N-linked (GlcNAc...) asparagine glycosylation.

The protein belongs to the NGF-beta family.

The protein localises to the secreted. Its function is as follows. Seems to promote the survival of visceral and proprioceptive sensory neurons. In Corallus caninus (Emerald tree boa), this protein is Neurotrophin-3 (NTF3).